We begin with the raw amino-acid sequence, 542 residues long: CTP synthase (542 aa).

The segment at 1–269 (MQTKYIFITG…DALICELLHL (269 aa)) is amidoligase domain. A CTP-binding site is contributed by Ser14. Ser14 serves as a coordination point for UTP. ATP is bound by residues 15–20 (SLGKGL) and Asp72. Mg(2+)-binding residues include Asp72 and Glu143. CTP contacts are provided by residues 150 to 152 (DIE), 189 to 194 (KTKPSQ), and Lys225. UTP contacts are provided by residues 189–194 (KTKPSQ) and Lys225. 241 to 243 (KDV) is a binding site for ATP. The Glutamine amidotransferase type-1 domain maps to 301–538 (YVQHQDAYKS…IQAMIIYHKS (238 aa)). Position 358 (Gly358) interacts with L-glutamine. Cys385 functions as the Nucleophile; for glutamine hydrolysis in the catalytic mechanism. L-glutamine-binding positions include 386–389 (LGMQ), Glu409, and Arg466. Catalysis depends on residues His511 and Glu513.

Belongs to the CTP synthase family. As to quaternary structure, homotetramer.

The catalysed reaction is UTP + L-glutamine + ATP + H2O = CTP + L-glutamate + ADP + phosphate + 2 H(+). It carries out the reaction L-glutamine + H2O = L-glutamate + NH4(+). It catalyses the reaction UTP + NH4(+) + ATP = CTP + ADP + phosphate + 2 H(+). Its pathway is pyrimidine metabolism; CTP biosynthesis via de novo pathway; CTP from UDP: step 2/2. With respect to regulation, allosterically activated by GTP, when glutamine is the substrate; GTP has no effect on the reaction when ammonia is the substrate. The allosteric effector GTP functions by stabilizing the protein conformation that binds the tetrahedral intermediate(s) formed during glutamine hydrolysis. Inhibited by the product CTP, via allosteric rather than competitive inhibition. In terms of biological role, catalyzes the ATP-dependent amination of UTP to CTP with either L-glutamine or ammonia as the source of nitrogen. Regulates intracellular CTP levels through interactions with the four ribonucleotide triphosphates. This is CTP synthase from Protochlamydia amoebophila (strain UWE25).